The primary structure comprises 465 residues: Probable Xaa-Pro aminopeptidase pepP (465 aa).

Mn(2+) is bound by residues Asp-261, Asp-272, Glu-395, and Glu-435.

Belongs to the peptidase M24B family. Mn(2+) is required as a cofactor.

It catalyses the reaction Release of any N-terminal amino acid, including proline, that is linked to proline, even from a dipeptide or tripeptide.. Functionally, catalyzes the removal of a penultimate prolyl residue from the N-termini of peptides. This chain is Probable Xaa-Pro aminopeptidase pepP (pepP), found in Talaromyces marneffei (strain ATCC 18224 / CBS 334.59 / QM 7333) (Penicillium marneffei).